Here is a 486-residue protein sequence, read N- to C-terminus: ATP synthase subunit beta (486 aa).

Residue 164 to 171 (GGAGVGKT) coordinates ATP.

This sequence belongs to the ATPase alpha/beta chains family. In terms of assembly, F-type ATPases have 2 components, CF(1) - the catalytic core - and CF(0) - the membrane proton channel. CF(1) has five subunits: alpha(3), beta(3), gamma(1), delta(1), epsilon(1). CF(0) has four main subunits: a(1), b(1), b'(1) and c(9-12).

It is found in the cellular thylakoid membrane. It carries out the reaction ATP + H2O + 4 H(+)(in) = ADP + phosphate + 5 H(+)(out). Functionally, produces ATP from ADP in the presence of a proton gradient across the membrane. The catalytic sites are hosted primarily by the beta subunits. The chain is ATP synthase subunit beta from Prochlorococcus marinus (strain MIT 9301).